Reading from the N-terminus, the 489-residue chain is Nuclear distribution protein PAC1 (489 aa).

The stretch at 66–98 forms a coiled coil; that stretch reads STVLRLQKKIIDLENEISNLNNIINSSNSDNNG. WD repeat units follow at residues 119-158, 164-205, 206-246, 249-291, 328-368, 389-428, and 437-486; these read QCEN…NTIP, AHTR…RTLN, GHEH…SLKS, GHSE…GLAM, IPLE…IAPH, GHSS…ETGS, and GHDG…NSIK.

Belongs to the WD repeat LIS1/nudF family. As to quaternary structure, self-associates. Interacts with NDL1 and dynein.

It is found in the cytoplasm. The protein resides in the cytoskeleton. The protein localises to the spindle pole. Functionally, positively regulates the activity of the minus-end directed microtubule motor protein dynein. Plays a central role in positioning the mitotic spindle at the bud neck during cell division. Targets cytoplasmic dynein to microtubule plus ends, thereby promoting dynein-mediated microtubule sliding along the bud cortex and consequently the movement of the mitotic spindle to the bud neck. This Candida dubliniensis (strain CD36 / ATCC MYA-646 / CBS 7987 / NCPF 3949 / NRRL Y-17841) (Yeast) protein is Nuclear distribution protein PAC1.